The sequence spans 26 residues: uncharacterized protein (26 aa).

Polar residues predominate over residues 1–16 (MPEQKANCSPNGNITV). The disordered stretch occupies residues 1-26 (MPEQKANCSPNGNITVDSMIMSLGSS).

This is an uncharacterized protein from Saccharomyces cerevisiae (strain ATCC 204508 / S288c) (Baker's yeast).